A 287-amino-acid chain; its full sequence is Pantothenate synthetase (287 aa).

M30–H37 contacts ATP. H37 serves as the catalytic Proton donor. Residue Q61 coordinates (R)-pantoate. Residue Q61 coordinates beta-alanine. Residue G149–D152 participates in ATP binding. Q155 contacts (R)-pantoate. ATP contacts are provided by residues V178 and L186 to R189.

Belongs to the pantothenate synthetase family. Homodimer.

It is found in the cytoplasm. The enzyme catalyses (R)-pantoate + beta-alanine + ATP = (R)-pantothenate + AMP + diphosphate + H(+). The protein operates within cofactor biosynthesis; (R)-pantothenate biosynthesis; (R)-pantothenate from (R)-pantoate and beta-alanine: step 1/1. Catalyzes the condensation of pantoate with beta-alanine in an ATP-dependent reaction via a pantoyl-adenylate intermediate. The sequence is that of Pantothenate synthetase from Pseudomonas putida (strain W619).